A 457-amino-acid polypeptide reads, in one-letter code: Argininosuccinate lyase (457 aa).

Belongs to the lyase 1 family. Argininosuccinate lyase subfamily.

It is found in the cytoplasm. It catalyses the reaction 2-(N(omega)-L-arginino)succinate = fumarate + L-arginine. Its pathway is amino-acid biosynthesis; L-arginine biosynthesis; L-arginine from L-ornithine and carbamoyl phosphate: step 3/3. In Escherichia coli O1:K1 / APEC, this protein is Argininosuccinate lyase.